Reading from the N-terminus, the 399-residue chain is Argonaute-binding protein 1 (399 aa).

In terms of assembly, component of the argonaute siRNA chaperone (ARC) complex composed of ago1, arb1 and arb2. Interacts with ago1.

Its subcellular location is the nucleus. The protein localises to the cytoplasm. In terms of biological role, component of the argonaute siRNA chaperone (ARC) complex which is required for histone H3K9 methylation, heterochromatin assembly and siRNA generation. The ARC complex contains mostly double-stranded siRNA. Inhibits the release of the siRNA passenger strand from ago1 together with arb2. Inhibits the slicer activity of ago1. Required for swi6 localization to the centromeric repeats. The protein is Argonaute-binding protein 1 (arb1) of Schizosaccharomyces pombe (strain 972 / ATCC 24843) (Fission yeast).